A 487-amino-acid chain; its full sequence is N-succinylglutamate 5-semialdehyde dehydrogenase (487 aa).

221-226 (GSSDTG) is an NAD(+) binding site. Active-site residues include Glu-244 and Cys-278.

The protein belongs to the aldehyde dehydrogenase family. AstD subfamily.

It carries out the reaction N-succinyl-L-glutamate 5-semialdehyde + NAD(+) + H2O = N-succinyl-L-glutamate + NADH + 2 H(+). It participates in amino-acid degradation; L-arginine degradation via AST pathway; L-glutamate and succinate from L-arginine: step 4/5. Functionally, catalyzes the NAD-dependent reduction of succinylglutamate semialdehyde into succinylglutamate. This Burkholderia cenocepacia (strain HI2424) protein is N-succinylglutamate 5-semialdehyde dehydrogenase.